Here is a 420-residue protein sequence, read N- to C-terminus: Glutamyl-tRNA reductase (420 aa).

Substrate-binding positions include 49 to 52, serine 109, 114 to 116, and glutamine 120; these read TCNR and EPQ. The Nucleophile role is filled by cysteine 50. NADP(+) is bound at residue 189 to 194; sequence GAGETI.

This sequence belongs to the glutamyl-tRNA reductase family. In terms of assembly, homodimer.

The enzyme catalyses (S)-4-amino-5-oxopentanoate + tRNA(Glu) + NADP(+) = L-glutamyl-tRNA(Glu) + NADPH + H(+). Its pathway is porphyrin-containing compound metabolism; protoporphyrin-IX biosynthesis; 5-aminolevulinate from L-glutamyl-tRNA(Glu): step 1/2. In terms of biological role, catalyzes the NADPH-dependent reduction of glutamyl-tRNA(Glu) to glutamate 1-semialdehyde (GSA). This Serratia proteamaculans (strain 568) protein is Glutamyl-tRNA reductase.